Reading from the N-terminus, the 446-residue chain is tRNA modification GTPase MnmE (446 aa).

Residues R24, E81, and K120 each coordinate (6S)-5-formyl-5,6,7,8-tetrahydrofolate. One can recognise a TrmE-type G domain in the interval 216 to 368 (GLHAVLIGPP…LHIRLRELAL (153 aa)). Residue N226 participates in K(+) binding. GTP is bound by residues 226–231 (NAGKSS), 245–251 (TDVAGTT), and 270–273 (DTAG). Residue S230 participates in Mg(2+) binding. 3 residues coordinate K(+): T245, V247, and T250. Residue T251 participates in Mg(2+) binding. K446 is a (6S)-5-formyl-5,6,7,8-tetrahydrofolate binding site.

It belongs to the TRAFAC class TrmE-Era-EngA-EngB-Septin-like GTPase superfamily. TrmE GTPase family. In terms of assembly, homodimer. Heterotetramer of two MnmE and two MnmG subunits. Requires K(+) as cofactor.

The protein localises to the cytoplasm. Exhibits a very high intrinsic GTPase hydrolysis rate. Involved in the addition of a carboxymethylaminomethyl (cmnm) group at the wobble position (U34) of certain tRNAs, forming tRNA-cmnm(5)s(2)U34. The polypeptide is tRNA modification GTPase MnmE (Xanthomonas oryzae pv. oryzae (strain MAFF 311018)).